The sequence spans 144 residues: Large ribosomal subunit protein uL15 (144 aa).

A disordered region spans residues 1-54 (MKLNTIKPAEGAKHARRRVGRGIGSGLGKTGGRGHKGQKSRAGGFHKVGFEGGQ). Over residues 21 to 31 (RGIGSGLGKTG) the composition is skewed to gly residues.

The protein belongs to the universal ribosomal protein uL15 family. As to quaternary structure, part of the 50S ribosomal subunit.

Binds to the 23S rRNA. The chain is Large ribosomal subunit protein uL15 from Methylobacillus flagellatus (strain ATCC 51484 / DSM 6875 / VKM B-1610 / KT).